Consider the following 189-residue polypeptide: GMP synthase [glutamine-hydrolyzing] subunit A (189 aa).

The 189-residue stretch at 1–189 (MIVILNNGGQ…CKKCGFEFEE (189 aa)) folds into the Glutamine amidotransferase type-1 domain. Cys76 (nucleophile) is an active-site residue. Catalysis depends on residues His163 and Glu165.

In terms of assembly, heterodimer composed of a glutamine amidotransferase subunit (A) and a GMP-binding subunit (B).

It catalyses the reaction XMP + L-glutamine + ATP + H2O = GMP + L-glutamate + AMP + diphosphate + 2 H(+). It functions in the pathway purine metabolism; GMP biosynthesis; GMP from XMP (L-Gln route): step 1/1. In terms of biological role, catalyzes the synthesis of GMP from XMP. The sequence is that of GMP synthase [glutamine-hydrolyzing] subunit A from Methanococcus maripaludis (strain C7 / ATCC BAA-1331).